Here is a 257-residue protein sequence, read N- to C-terminus: MVDIHSTAIIEDGAIIEDGVKIGPYCIVGKDVVIKKGTVLQSHVVVEGITEIGENNTIYSFVSIGKDNQDLKYKGEPTKTIIGNNNSIREFVTIHRGTDDRWETRIGNGNLIMAYVHVAHDVIIGDDCIFSNNVTLAGHVVIDSHAIIGGLTPIHQFTRIGSYSMIGGASAVSQDVCPFVLAAGNTVVLRGLNIVGLRRRGFSDEEISNLKKAYRILFRQGLQLKDALEELEKDFSEDKNVKYLVDFIKSSDRGIAR.

Belongs to the transferase hexapeptide repeat family. LpxA subfamily. As to quaternary structure, homotrimer.

It is found in the cytoplasm. It carries out the reaction a (3R)-hydroxyacyl-[ACP] + UDP-N-acetyl-alpha-D-glucosamine = a UDP-3-O-[(3R)-3-hydroxyacyl]-N-acetyl-alpha-D-glucosamine + holo-[ACP]. The protein operates within glycolipid biosynthesis; lipid IV(A) biosynthesis; lipid IV(A) from (3R)-3-hydroxytetradecanoyl-[acyl-carrier-protein] and UDP-N-acetyl-alpha-D-glucosamine: step 1/6. Its function is as follows. Involved in the biosynthesis of lipid A, a phosphorylated glycolipid that anchors the lipopolysaccharide to the outer membrane of the cell. This is Acyl-[acyl-carrier-protein]--UDP-N-acetylglucosamine O-acyltransferase from Fusobacterium nucleatum subsp. nucleatum (strain ATCC 25586 / DSM 15643 / BCRC 10681 / CIP 101130 / JCM 8532 / KCTC 2640 / LMG 13131 / VPI 4355).